Here is a 94-residue protein sequence, read N- to C-terminus: Large ribosomal subunit protein eL43B (94 aa).

The C4-type zinc finger occupies 39 to 62; the sequence is CPFCGRLTVKRTAAGIWKCSGKGC.

The protein belongs to the eukaryotic ribosomal protein eL43 family. Component of the large ribosomal subunit (LSU). Mature yeast ribosomes consist of a small (40S) and a large (60S) subunit. The 40S small subunit contains 1 molecule of ribosomal RNA (18S rRNA) and at least 33 different proteins. The large 60S subunit contains 3 rRNA molecules (25S, 5.8S and 5S rRNA) and at least 46 different proteins.

It localises to the cytoplasm. Functionally, component of the ribosome, a large ribonucleoprotein complex responsible for the synthesis of proteins in the cell. The small ribosomal subunit (SSU) binds messenger RNAs (mRNAs) and translates the encoded message by selecting cognate aminoacyl-transfer RNA (tRNA) molecules. The large subunit (LSU) contains the ribosomal catalytic site termed the peptidyl transferase center (PTC), which catalyzes the formation of peptide bonds, thereby polymerizing the amino acids delivered by tRNAs into a polypeptide chain. The nascent polypeptides leave the ribosome through a tunnel in the LSU and interact with protein factors that function in enzymatic processing, targeting, and the membrane insertion of nascent chains at the exit of the ribosomal tunnel. This is Large ribosomal subunit protein eL43B (rpl4302) from Schizosaccharomyces pombe (strain 972 / ATCC 24843) (Fission yeast).